The primary structure comprises 549 residues: Frizzled/smoothened-like sans CRD protein A (549 aa).

The N-terminal stretch at 1 to 22 (MKFNFKLILIILIINQILIINC) is a signal peptide. At 23–89 (KENKILEIYK…EVNTLSLMIK (67 aa)) the chain is on the extracellular side. Asn-63 carries N-linked (GlcNAc...) asparagine glycosylation. The helical transmembrane segment at 90–110 (ITGTISFIASLILLLIYSPLI) threads the bilayer. Over 111 to 119 (NRMGYNRHT) the chain is Cytoplasmic. A helical membrane pass occupies residues 120–140 (IGIFFLTFSVFLIMLTDIIYV). The Extracellular portion of the chain corresponds to 141-162 (HHGNDLICPQSHRYSRQNDSGC). Asn-158 carries N-linked (GlcNAc...) asparagine glycosylation. A helical transmembrane segment spans residues 163-183 (TITGILFQYGCIAAVLFWATL). Residues 184 to 198 (SLDLYLTLKKISTKK) lie on the Cytoplasmic side of the membrane. Residues 199 to 219 (VEKWYLIILTLIALILTFVPL) traverse the membrane as a helical segment. The Extracellular segment spans residues 220 to 241 (VKKSYGYLVTGLACWILDSTDQ). A helical membrane pass occupies residues 242–262 (IIFFWAPFTAILGIGSILIVL). Over 263–287 (VVYEIYKISKITKQNRGIFQSHIRP) the chain is Cytoplasmic. Residues 288–308 (LLMVLFIFGQFLFILAFNALI) form a helical membrane-spanning segment. Over 309 to 346 (NNKYDEYSARMDSYIDCLFSSSSYSYLCRLKTFPFEME) the chain is Extracellular. Residues 347–367 (FIVLFFLRLIGIEVLIFYGFT) traverse the membrane as a helical segment. Topologically, residues 368-549 (QQTKKILLHS…NNNSNNDENN (182 aa)) are cytoplasmic. 2 stretches are compositionally biased toward low complexity: residues 417 to 474 (NNNN…SQQN) and 536 to 549 (NKNI…DENN). 2 disordered regions span residues 417-483 (NNNN…QKLS) and 528-549 (QYEE…DENN). Residues 432–475 (NNLNNNLNNNNLNNNNNLNNLNNLNINNNLKNSQNNLNNSQQNE) are a coiled coil.

This sequence belongs to the G-protein coupled receptor Fz/Smo family.

Its subcellular location is the membrane. The polypeptide is Frizzled/smoothened-like sans CRD protein A (fscA) (Dictyostelium discoideum (Social amoeba)).